The following is a 356-amino-acid chain: Histidinol-phosphate aminotransferase (356 aa).

The residue at position 214 (K214) is an N6-(pyridoxal phosphate)lysine.

The protein belongs to the class-II pyridoxal-phosphate-dependent aminotransferase family. Histidinol-phosphate aminotransferase subfamily. As to quaternary structure, homodimer. The cofactor is pyridoxal 5'-phosphate.

The catalysed reaction is L-histidinol phosphate + 2-oxoglutarate = 3-(imidazol-4-yl)-2-oxopropyl phosphate + L-glutamate. The protein operates within amino-acid biosynthesis; L-histidine biosynthesis; L-histidine from 5-phospho-alpha-D-ribose 1-diphosphate: step 7/9. The chain is Histidinol-phosphate aminotransferase from Escherichia fergusonii (strain ATCC 35469 / DSM 13698 / CCUG 18766 / IAM 14443 / JCM 21226 / LMG 7866 / NBRC 102419 / NCTC 12128 / CDC 0568-73).